A 537-amino-acid polypeptide reads, in one-letter code: Protein ST7 homolog (537 aa).

The chain crosses the membrane as a helical span at residues 15–35 (FYVALTGTSSLISGLILIFEW). Residues 61–111 (SDGQSESSNGSGSSSSSGSSSSSNGGAGGGGSGGAGASGSGSATTSTGTQM) form a disordered region. The segment covering 67 to 84 (SSNGSGSSSSSGSSSSSN) has biased composition (low complexity). Gly residues predominate over residues 85–99 (GGAGGGGSGGAGASG). Positions 100–109 (SGSATTSTGT) are enriched in low complexity. The chain crosses the membrane as a helical span at residues 472–492 (LPFFILFTAGLCSITALLALA).

This sequence belongs to the ST7 family.

The protein localises to the membrane. This is Protein ST7 homolog from Drosophila melanogaster (Fruit fly).